The following is a 351-amino-acid chain: Uroporphyrinogen decarboxylase (351 aa).

Residues 25 to 29, Asp-74, Tyr-151, Ser-206, and His-325 each bind substrate; that span reads RQAGR.

It belongs to the uroporphyrinogen decarboxylase family. Homodimer.

The protein resides in the cytoplasm. The enzyme catalyses uroporphyrinogen III + 4 H(+) = coproporphyrinogen III + 4 CO2. It participates in porphyrin-containing compound metabolism; protoporphyrin-IX biosynthesis; coproporphyrinogen-III from 5-aminolevulinate: step 4/4. Its function is as follows. Catalyzes the decarboxylation of four acetate groups of uroporphyrinogen-III to yield coproporphyrinogen-III. In Chlorobium luteolum (strain DSM 273 / BCRC 81028 / 2530) (Pelodictyon luteolum), this protein is Uroporphyrinogen decarboxylase.